The chain runs to 344 residues: UPF0283 membrane protein YcjF (344 aa).

3 consecutive transmembrane segments (helical) span residues 70-90 (MVMGGLALFGASVVGQGVQWT), 100-120 (VALGGCAAGALIIGAGVGSVV), and 213-233 (ESTLMIAVSPLALVDMAFIAW).

This sequence belongs to the UPF0283 family.

It is found in the cell inner membrane. In Shigella dysenteriae serotype 1 (strain Sd197), this protein is UPF0283 membrane protein YcjF.